The primary structure comprises 92 residues: Small ribosomal subunit protein bS18 (92 aa).

Residues 1–28 (MTQQGNSGERKPRGKGPKRPRKPKVDPF) are disordered. Residues 12–22 (PRGKGPKRPRK) show a composition bias toward basic residues.

This sequence belongs to the bacterial ribosomal protein bS18 family. Part of the 30S ribosomal subunit. Forms a tight heterodimer with protein bS6.

Its function is as follows. Binds as a heterodimer with protein bS6 to the central domain of the 16S rRNA, where it helps stabilize the platform of the 30S subunit. This is Small ribosomal subunit protein bS18 from Deinococcus radiodurans (strain ATCC 13939 / DSM 20539 / JCM 16871 / CCUG 27074 / LMG 4051 / NBRC 15346 / NCIMB 9279 / VKM B-1422 / R1).